Reading from the N-terminus, the 372-residue chain is Cytochrome b (372 aa).

Helical transmembrane passes span F25–I45, W69–I90, W105–L125, and F170–M190. The heme b site is built by H75 and H89. The heme b site is built by H174 and H188. H193 is a binding site for a ubiquinone. 4 consecutive transmembrane segments (helical) span residues H218 to N238, L280 to H300, L312 to T332, and F339 to P358.

Belongs to the cytochrome b family. In terms of assembly, the cytochrome bc1 complex contains 3 respiratory subunits (MT-CYB, CYC1 and UQCRFS1), 2 core proteins (UQCRC1 and UQCRC2) and probably 6 low-molecular weight proteins. Requires heme b as cofactor.

The protein localises to the mitochondrion inner membrane. Functionally, component of the ubiquinol-cytochrome c reductase complex (complex III or cytochrome b-c1 complex) that is part of the mitochondrial respiratory chain. The b-c1 complex mediates electron transfer from ubiquinol to cytochrome c. Contributes to the generation of a proton gradient across the mitochondrial membrane that is then used for ATP synthesis. This chain is Cytochrome b (MT-CYB), found in Pantherophis bairdi (Baird's ratsnake).